Consider the following 213-residue polypeptide: 3-isopropylmalate dehydratase small subunit (213 aa).

It belongs to the LeuD family. LeuD type 1 subfamily. As to quaternary structure, heterodimer of LeuC and LeuD.

The catalysed reaction is (2R,3S)-3-isopropylmalate = (2S)-2-isopropylmalate. It participates in amino-acid biosynthesis; L-leucine biosynthesis; L-leucine from 3-methyl-2-oxobutanoate: step 2/4. In terms of biological role, catalyzes the isomerization between 2-isopropylmalate and 3-isopropylmalate, via the formation of 2-isopropylmaleate. The chain is 3-isopropylmalate dehydratase small subunit from Magnetococcus marinus (strain ATCC BAA-1437 / JCM 17883 / MC-1).